Here is a 126-residue protein sequence, read N- to C-terminus: uncharacterized protein (126 aa).

3 helical membrane-spanning segments follow: residues 4–24, 42–62, and 64–84; these read LIIAGILLLIKAMIFCIVNIL, AITIISSSVLYFLLSYYIINP, and ISASIIFDDCFSIFMLSSYTV.

Its subcellular location is the membrane. This is an uncharacterized protein from Saccharomyces cerevisiae (strain ATCC 204508 / S288c) (Baker's yeast).